Reading from the N-terminus, the 123-residue chain is PTS system glucitol/sorbitol-specific EIIA component (123 aa).

Residues 1-116 (MTVIYQTTIT…PDDIAPGSVL (116 aa)) form the PTS EIIA type-5 domain. The active-site Tele-phosphohistidine intermediate is the His43. His43 is subject to Phosphohistidine; by HPr.

It localises to the cytoplasm. Its function is as follows. The phosphoenolpyruvate-dependent sugar phosphotransferase system (sugar PTS), a major carbohydrate active transport system, catalyzes the phosphorylation of incoming sugar substrates concomitantly with their translocation across the cell membrane. The enzyme II complex composed of SrlA, SrlB and SrlE is involved in glucitol/sorbitol transport. This is PTS system glucitol/sorbitol-specific EIIA component (srlB) from Shigella flexneri.